Here is a 450-residue protein sequence, read N- to C-terminus: Keratin, type I cytoskeletal 25 (450 aa).

Low complexity predominate over residues 1–23 (MSLRLSSASRRSCPRPTTGSLRL). Positions 1-26 (MSLRLSSASRRSCPRPTTGSLRLSGG) are disordered. A head region spans residues 1-78 (MSLRLSSASR…VNERGLLSGN (78 aa)). A coil 1A region spans residues 79–114 (EKVTMQNLNDRLASYLDSVHALEEANADLEQKIKGW). One can recognise an IF rod domain in the interval 79-394 (EKVTMQNLND…LLIGGDDGAC (316 aa)). A linker 1 region spans residues 115 to 136 (YEKFGPGSCRGLDHDYSRYFPI). A coil 1B region spans residues 137–228 (IDDLKNQIIA…KNHKEEMQVL (92 aa)). Residues 229–251 (QCAAGGNVNVEMNAAPGVDLTVL) are linker 12. Residues 252-390 (LNNMRAEYEA…ETYCLLIGGD (139 aa)) form a coil 2 region. Positions 391–450 (DGACKSGGYKSKDYGSGNVGSQVKDSAKAIVVKKVLEEVDQRSKILTTRLRSLEEKSQSN) are tail. Ser-442 carries the phosphoserine modification.

The protein belongs to the intermediate filament family. In terms of assembly, heterodimer of a type I and a type II keratin. Heterodimer with type II keratin KRT5 leading to the formation of keratin intermediate filament (KIF) network. Interacts with KRT6A to form filaments.

The protein resides in the cytoplasm. Functionally, essential for the proper assembly of type I and type II keratin protein complexes and formation of keratin intermediate filaments in the inner root sheath (irs). Plays a role in the cytoskeleton organization. This chain is Keratin, type I cytoskeletal 25 (KRT25), found in Pan troglodytes (Chimpanzee).